We begin with the raw amino-acid sequence, 181 residues long: ADP-ribosylation factor 1 (181 aa).

Glycine 2 carries the N-myristoyl glycine lipid modification. Residues 3–16 form an important for the stable binding to the membranes region; it reads LYVSRLFNRLFQKK. GTP-binding positions include 27–32, 126–129, and alanine 160; these read AAGKTT and NKQD.

Belongs to the small GTPase superfamily. Arf family. May interact with GTPase RAB5b.

It is found in the golgi apparatus membrane. The catalysed reaction is GTP + H2O = GDP + phosphate + H(+). With respect to regulation, alternates between an inactive GDP-bound form and an active GTP-bound form. Intrinsic GTPase activity is almost undetectable in vitro. Activated by a guanine nucleotide-exchange factor (GEF) and inactivated by GTPase-activating protein ARFGAP1. In terms of biological role, small GTPase involved in protein trafficking between different compartments. Modulates vesicle budding and uncoating within the Golgi complex. In its GTP-bound form, triggers the recruitment of coatomer proteins to the Golgi membrane. The hydrolysis of ARF1-bound GTP, which is mediated by ARFGAPs proteins, is required for dissociation of coat proteins from Golgi membranes and vesicles. Regulates the transport of N-acylated AK2 to the parasitophorous vacuole membrane. May be involved in the activation of lipid kinase PIP5K. This chain is ADP-ribosylation factor 1, found in Plasmodium falciparum (isolate 3D7).